Consider the following 266-residue polypeptide: MHPILNIAIRVARKCGNILIQYYDRNKTNNEKQILKKDFITKIIFVLEKTMIDMIHKSYPEHSIITYHKNNKIFKNTEIIWLINALDGIKNFENNLPHFCISIAIIVRKTTQISVIYDPIRNELFTSVKGQGSQLNGYRMRCKSTNTLKRSLVGLVYPCNNSKFQNYFFTIINLLFSHEVKLRCTGCISLDCAYVAMGRLDYLFNGNLIPLLFSSGSLQIKESGGLISDLNGGHDYVSSGIILIGNPKLMRVILVKIRELFQNNLK.

Residue 86–89 (LDGI) participates in substrate binding.

Belongs to the inositol monophosphatase superfamily. In terms of assembly, homodimer. The rRNA transcription and antitermination complex (rrnTAC) consists of RNA polymerase (RNAP), NusA, NusB, NusE (rpsJ), NusG, SubB, ribosomal protein S4, DNA and precursor rRNA; S4 is more flexible than other subunits. Mg(2+) is required as a cofactor.

The protein localises to the cytoplasm. It catalyses the reaction a myo-inositol phosphate + H2O = myo-inositol + phosphate. Its function is as follows. Part of the processive rRNA transcription and antitermination complex (rrnTAC). The complex forms an RNA-chaperone ring around the RNA exit tunnel of RNA polymerase (RNAP). It supports rapid transcription and antitermination of rRNA operons, cotranscriptional rRNA folding, and annealing of distal rRNA regions to allow correct ribosome biogenesis. This subunit may play a central role in organizing the structure. The sequence is that of Nus factor SuhB (suhB) from Buchnera aphidicola subsp. Baizongia pistaciae (strain Bp).